Reading from the N-terminus, the 378-residue chain is tRNA N(3)-cytidine methyltransferase METTL2 (378 aa).

Residues Trp78, Tyr82, Gly188, Asp213, Asp239, Leu240, and Ile260 each coordinate S-adenosyl-L-methionine.

The protein belongs to the methyltransferase superfamily. METL family. As to quaternary structure, monomer. Interacts with DALRD3.

Its subcellular location is the cytoplasm. The enzyme catalyses cytidine(32) in tRNA(Thr) + S-adenosyl-L-methionine = N(3)-methylcytidine(32) in tRNA(Thr) + S-adenosyl-L-homocysteine + H(+). It catalyses the reaction cytidine(32) in tRNA(Arg)(CCU) + S-adenosyl-L-methionine = N(3)-methylcytidine(32) in tRNA(Arg)(CCU) + S-adenosyl-L-homocysteine + H(+). S-adenosyl-L-methionine-dependent methyltransferase that mediates N(3)-methylcytidine modification of residue 32 of the tRNA anticodon loop of tRNA(Thr)(UGU) and tRNA(Arg)(CCU). N(3)-methylcytidine methylation by METTL2 requires the N6-threonylcarbamoylation of tRNA (t6A37) by the EKC/KEOPS complex as prerequisite. This chain is tRNA N(3)-cytidine methyltransferase METTL2 (METTL2), found in Bos taurus (Bovine).